A 601-amino-acid chain; its full sequence is Elongation factor 4 (601 aa).

Positions 5–187 (ENIRNFCIIA…AIVHHLPAPK (183 aa)) constitute a tr-type G domain. GTP is bound by residues 17 to 22 (DHGKST) and 134 to 137 (NKID).

It belongs to the TRAFAC class translation factor GTPase superfamily. Classic translation factor GTPase family. LepA subfamily.

Its subcellular location is the cell inner membrane. It carries out the reaction GTP + H2O = GDP + phosphate + H(+). Its function is as follows. Required for accurate and efficient protein synthesis under certain stress conditions. May act as a fidelity factor of the translation reaction, by catalyzing a one-codon backward translocation of tRNAs on improperly translocated ribosomes. Back-translocation proceeds from a post-translocation (POST) complex to a pre-translocation (PRE) complex, thus giving elongation factor G a second chance to translocate the tRNAs correctly. Binds to ribosomes in a GTP-dependent manner. In Desulfovibrio desulfuricans (strain ATCC 27774 / DSM 6949 / MB), this protein is Elongation factor 4.